The following is a 319-amino-acid chain: MQNRNTYDLKKKMTRLISVLVMIHIITRTSISNAYPIFAQQGYENPREATGRIVCANCHLAKKPVDIEGPQSVLPNTVFEAVVKIPYDTQMKQVLANGKKGALNVGAVLILPEGFELAPPDRISPEIRQKMGNLYFQNYRPNQKNIIVIGPVPGQKYSELVFPILSPDPATDKEAHFLKYPIYLGGNRGRGQIYPDGSKSNNTVYSASATGRVSKILRKEKGGYEITIDNTSDGGQVVDIVPPGPELLISEGELIKVDQPLTNNPNVGGFGQGDAEIVLQDPLRVKGLLLFLASVILAQIFLVLKKKQFEKVQLAEMNL.

The first 34 residues, methionine 1 to alanine 34, serve as a signal peptide directing secretion. 4 residues coordinate heme: tyrosine 35, cysteine 55, cysteine 58, and histidine 59. A helical membrane pass occupies residues valine 285–leucine 304.

The protein belongs to the cytochrome f family. In terms of assembly, the 4 large subunits of the cytochrome b6-f complex are cytochrome b6, subunit IV (17 kDa polypeptide, petD), cytochrome f and the Rieske protein, while the 4 small subunits are PetG, PetL, PetM and PetN. The complex functions as a dimer. Heme is required as a cofactor.

Its subcellular location is the plastid. The protein resides in the chloroplast thylakoid membrane. In terms of biological role, component of the cytochrome b6-f complex, which mediates electron transfer between photosystem II (PSII) and photosystem I (PSI), cyclic electron flow around PSI, and state transitions. The protein is Cytochrome f (petA) of Picea abies (Norway spruce).